The chain runs to 92 residues: Probable Fe(2+)-trafficking protein (92 aa).

This sequence belongs to the Fe(2+)-trafficking protein family.

Could be a mediator in iron transactions between iron acquisition and iron-requiring processes, such as synthesis and/or repair of Fe-S clusters in biosynthetic enzymes. This Shewanella woodyi (strain ATCC 51908 / MS32) protein is Probable Fe(2+)-trafficking protein.